The primary structure comprises 91 residues: Small ribosomal subunit protein uS19 (91 aa).

This sequence belongs to the universal ribosomal protein uS19 family.

Its function is as follows. Protein S19 forms a complex with S13 that binds strongly to the 16S ribosomal RNA. This chain is Small ribosomal subunit protein uS19, found in Prochlorococcus marinus (strain MIT 9515).